The chain runs to 149 residues: Protein E6 (149 aa).

2 zinc fingers span residues 30–66 and 103–139; these read CVECKKTLQRSEVYDFVFADLRIVYRDGNPFAVCKVC and CIICQRPLCPQEKKRHVDLNKRFHNISGRWTGRCAVC. The short motif at 147–149 is the PDZ-binding domain element; sequence TQV.

This sequence belongs to the papillomaviridae E6 protein family. In terms of assembly, forms homodimers. Interacts with ubiquitin-protein ligase UBE3A/E6-AP and thus forms a complex with human TP53. Interacts with human NFX1 and MAGI3. Interacts with human IRF3; this interaction inhibits the establishment of antiviral state. Interacts with human TYK2; this interaction inhibits JAK-STAT activation by interferon alpha. Interacts with host DLG1; this interaction leads to the proteasomal degradation of DLG1.

It is found in the host cytoplasm. The protein resides in the host nucleus. In terms of biological role, plays a major role in the induction and maintenance of cellular transformation. Acts mainly as an oncoprotein by stimulating the destruction of many host cell key regulatory proteins. E6 associates with host UBE3A/E6-AP ubiquitin-protein ligase, and inactivates tumor suppressors TP53 and TP73 by targeting them to the 26S proteasome for degradation. In turn, DNA damage and chromosomal instabilities increase and lead to cell proliferation and cancer development. The complex E6/E6AP targets several other substrates to degradation via the proteasome including host DLG1 or NFX1, a repressor of human telomerase reverse transcriptase (hTERT). The resulting increased expression of hTERT prevents the shortening of telomere length leading to cell immortalization. Other cellular targets including BAK1, Fas-associated death domain-containing protein (FADD) and procaspase 8, are degraded by E6/E6AP causing inhibition of apoptosis. E6 also inhibits immune response by interacting with host IRF3 and TYK2. These interactions prevent IRF3 transcriptional activities and inhibit TYK2-mediated JAK-STAT activation by interferon alpha resulting in inhibition of the interferon signaling pathway. The protein is Protein E6 of Human papillomavirus 58.